The sequence spans 90 residues: Sakacin-A immunity factor (90 aa).

Its function is as follows. Imparts immunity to sakacin-A to naturally sensitive host strains. The polypeptide is Sakacin-A immunity factor (saiA) (Latilactobacillus sakei (Lactobacillus sakei)).